The primary structure comprises 695 residues: Elongation factor G 1 (695 aa).

Residues 6-284 (SKVRNIGISA…AVETYLPCPT (279 aa)) form the tr-type G domain. Residues 15 to 22 (AHIDSGKT), 82 to 86 (DTPGH), and 136 to 139 (NKCD) each bind GTP.

It belongs to the TRAFAC class translation factor GTPase superfamily. Classic translation factor GTPase family. EF-G/EF-2 subfamily.

It is found in the cytoplasm. Functionally, catalyzes the GTP-dependent ribosomal translocation step during translation elongation. During this step, the ribosome changes from the pre-translocational (PRE) to the post-translocational (POST) state as the newly formed A-site-bound peptidyl-tRNA and P-site-bound deacylated tRNA move to the P and E sites, respectively. Catalyzes the coordinated movement of the two tRNA molecules, the mRNA and conformational changes in the ribosome. The chain is Elongation factor G 1 from Desulfotalea psychrophila (strain LSv54 / DSM 12343).